A 138-amino-acid chain; its full sequence is Protein FAM136A (138 aa).

Ala-2 is modified (N-acetylalanine). 2 positions are modified to phosphothreonine: Thr-124 and Thr-126.

The protein belongs to the FAM136 family.

This is Protein FAM136A (FAM136A) from Bos taurus (Bovine).